The chain runs to 336 residues: MNYKDAGVNIDEGNKLVEMIKPIAKKTLTDNVLEGIGGFAALFEIKNYKNPVIVSSTDGVGTKLKIAFMMDKHDTVGIDLVAMCVNDIIVTGAKPLFFLDYFATGKLKSEVAVEVIKGIAEGCKIAGCALIGGETAELPGFYKEGEYDLAGFCVGIVEKEELIDTKSIKEGDAIIGLASSGIHSNGYSLVRKVFFEKNNFSVKDFIPELGMNLGDALLTPTKIYVKSIEALKELKIKGMAHITGGGFIDNIPRILRKSIAAKINKGSWKIPTIFNLIQRLGDIEEREMYRTFNMGIGMVVIVDPSDVDKALEKLNGIGEKAYVIGEIVESEGGVIL.

It belongs to the AIR synthase family.

The protein localises to the cytoplasm. It catalyses the reaction 2-formamido-N(1)-(5-O-phospho-beta-D-ribosyl)acetamidine + ATP = 5-amino-1-(5-phospho-beta-D-ribosyl)imidazole + ADP + phosphate + H(+). The protein operates within purine metabolism; IMP biosynthesis via de novo pathway; 5-amino-1-(5-phospho-D-ribosyl)imidazole from N(2)-formyl-N(1)-(5-phospho-D-ribosyl)glycinamide: step 2/2. The sequence is that of Phosphoribosylformylglycinamidine cyclo-ligase from Thermoanaerobacter pseudethanolicus (strain ATCC 33223 / 39E) (Clostridium thermohydrosulfuricum).